Here is a 22-residue protein sequence, read N- to C-terminus: Mu-conotoxin SxIIIC (22 aa).

Cystine bridges form between cysteine 3–cysteine 15, cysteine 4–cysteine 21, and cysteine 10–cysteine 22. Residue cysteine 22 is modified to Cysteine amide.

It belongs to the conotoxin M superfamily. Expressed by the venom duct.

The protein localises to the secreted. In terms of biological role, mu-conotoxins block voltage-gated sodium channels (Nav). This toxin potently inhibits hNav1.4/SCN4A (IC(50)=15.11 nM). It also displays lower activities on other human subtypes (Nav1.1/SCN1A; IC(50)=132 nM, Nav1.2/SCN2A; IC(50)=363.8, Nav1.3/SCN3A; IC(50)=89.4, Nav1.6/SCN3A; IC(50)=124.9, Nav1.7/SCN7A; IC(50)=152.2). At Nav1.7/SCN9A, it does not elicit change in channel voltage-dependence of fast inactivation or activation, suggesting it acts as a pore blocker. Interestingly, it blocks current inhibition in an irreversible manner (tested during 35 minutes). The sequence is that of Mu-conotoxin SxIIIC from Conus striolatus (Cone snail).